Consider the following 361-residue polypeptide: Biotin synthase (361 aa).

The Radical SAM core domain maps to asparagine 63–arginine 290. [4Fe-4S] cluster contacts are provided by cysteine 78, cysteine 82, and cysteine 85. Residues cysteine 122, cysteine 153, cysteine 213, and arginine 285 each contribute to the [2Fe-2S] cluster site.

It belongs to the radical SAM superfamily. Biotin synthase family. In terms of assembly, homodimer. The cofactor is [4Fe-4S] cluster. Requires [2Fe-2S] cluster as cofactor.

The enzyme catalyses (4R,5S)-dethiobiotin + (sulfur carrier)-SH + 2 reduced [2Fe-2S]-[ferredoxin] + 2 S-adenosyl-L-methionine = (sulfur carrier)-H + biotin + 2 5'-deoxyadenosine + 2 L-methionine + 2 oxidized [2Fe-2S]-[ferredoxin]. Its pathway is cofactor biosynthesis; biotin biosynthesis; biotin from 7,8-diaminononanoate: step 2/2. Functionally, catalyzes the conversion of dethiobiotin (DTB) to biotin by the insertion of a sulfur atom into dethiobiotin via a radical-based mechanism. This is Biotin synthase from Paraburkholderia phytofirmans (strain DSM 17436 / LMG 22146 / PsJN) (Burkholderia phytofirmans).